Reading from the N-terminus, the 332-residue chain is Alanine racemase (332 aa).

Lys33 serves as the catalytic Proton acceptor; specific for D-alanine. Lys33 carries the post-translational modification N6-(pyridoxal phosphate)lysine. Substrate is bound at residue Arg115. Tyr245 functions as the Proton acceptor; specific for L-alanine in the catalytic mechanism. Met286 provides a ligand contact to substrate.

This sequence belongs to the alanine racemase family. The cofactor is pyridoxal 5'-phosphate.

The catalysed reaction is L-alanine = D-alanine. The protein operates within amino-acid biosynthesis; D-alanine biosynthesis; D-alanine from L-alanine: step 1/1. Functionally, catalyzes the interconversion of L-alanine and D-alanine. May also act on other amino acids. This chain is Alanine racemase (alr), found in Nitratiruptor sp. (strain SB155-2).